The sequence spans 249 residues: Phosphoserine phosphatase (249 aa).

This sequence belongs to the HAD-like hydrolase superfamily. In terms of assembly, homodimer. Requires Mg(2+) as cofactor. The cofactor is Co(2+).

It catalyses the reaction O-phospho-L-serine + H2O = L-serine + phosphate. The catalysed reaction is O-phospho-D-serine + H2O = D-serine + phosphate. The protein operates within amino-acid biosynthesis; L-serine biosynthesis; L-serine from 3-phospho-D-glycerate: step 3/3. Functionally, catalyzes the last step of the phosphorylated serine biosynthetic pathway, i.e. dephosphorylation of O-phospho-L-serine to form L-serine. Is also able to dephosphorylate O-phospho-D-serine with similar efficiency. Displays a poor activity on L-phosphothreonine, and cannot use L-phosphotyrosine, pyridoxal phosphate, glucose 6-phosphate, or fructose 6-phosphate as substrates. The polypeptide is Phosphoserine phosphatase (Thermus thermophilus (strain ATCC BAA-163 / DSM 7039 / HB27)).